The chain runs to 2281 residues: Retinal-specific phospholipid-transporting ATPase ABCA4 (2281 aa).

Residues Met-1–Arg-24 are Cytoplasmic-facing. The helical transmembrane segment at Phe-25 to Val-45 threads the bilayer. Residues Asn-46–Ser-646 are Extracellular-facing. Disulfide bonds link Cys-54–Cys-81 and Cys-75–Cys-324. Asn-98 is a glycosylation site (N-linked (GlcNAc...) asparagine). Ser-336 and Asn-338 together coordinate Mg(2+). A disulfide bridge links Cys-370 with Cys-519. 2 N-linked (Hex...) asparagine glycosylation sites follow: Asn-415 and Asn-504. 2 residues coordinate an N-all-trans-retinylidenephosphatidylethanolamine: Arg-587 and Arg-653. 3 disulfides stabilise this stretch: Cys-641/Cys-1488, Cys-1442/Cys-1453, and Cys-1486/Cys-1500. Residues Phe-647 to Val-667 traverse the membrane as a helical segment. Residues Ser-668 to Thr-699 lie on the Cytoplasmic side of the membrane. Residues Trp-700–Met-720 form a helical membrane-spanning segment. The Extracellular portion of the chain corresponds to His-721–Pro-730. Residues Phe-731–Leu-751 form a helical membrane-spanning segment. The Cytoplasmic segment spans residues Ser-752–Ser-759. Residues Leu-760–Phe-780 form a helical membrane-spanning segment. The Extracellular portion of the chain corresponds to Ala-781–Ser-835. A helical membrane pass occupies residues Phe-836 to Tyr-856. Residues Leu-857–Gln-1374 are Cytoplasmic-facing. Thr-901 carries the phosphothreonine modification. In terms of domain architecture, ABC transporter 1 spans Val-929–Val-1160. The ATP site is built by Phe-938, Gly-966, and Lys-969. Thr-970 contributes to the Mg(2+) binding site. The ATP site is built by Thr-971, Gln-1010, Lys-1054, Gly-1064, Gly-1065, and His-1118. A Phosphoserine modification is found at Ser-1185. The tract at residues Glu-1295–Ser-1340 is disordered. Residues Ala-1310 to Ser-1319 show a composition bias toward polar residues. Phosphothreonine is present on Thr-1313. Ser-1317 and Ser-1319 each carry phosphoserine. Residues Ile-1375–Phe-1395 form a helical membrane-spanning segment. At Gly-1396–Val-1679 the chain is on the extracellular side. N-linked (Hex...) asparagine glycosylation occurs at Asn-1455. The N-linked (Hex...) asparagine glycan is linked to Asn-1527. Residue Asn-1586 is glycosylated (N-linked (GlcNAc...) asparagine). The N-linked (Hex...) asparagine glycan is linked to Asn-1660. The chain crosses the membrane as a helical span at residues Val-1680–Ile-1700. The Cytoplasmic portion of the chain corresponds to Gln-1701 to Asn-1725. Residues Phe-1726–Gly-1746 traverse the membrane as a helical segment. Topologically, residues Phe-1747–Asn-1757 are extracellular. The helical transmembrane segment at Leu-1758 to Pro-1778 threads the bilayer. Topologically, residues Ala-1779 to Tyr-1790 are cytoplasmic. The chain crosses the membrane as a helical span at residues Val-1791–Leu-1811. The Extracellular portion of the chain corresponds to Glu-1812–Lys-1829. The N-linked (GlcNAc...) asparagine glycan is linked to Asn-1817. The helical transmembrane segment at Leu-1830 to Gln-1850 threads the bilayer. At Ala-1851–Ala-1879 the chain is on the cytoplasmic side. A helical transmembrane segment spans residues Met-1880–Phe-1900. Over Ser-1901–Gly-2281 the chain is Extracellular. Asn-1931 is a glycosylation site (N-linked (GlcNAc...) asparagine). One can recognise an ABC transporter 2 domain in the interval Leu-1936–Lys-2168. ATP contacts are provided by Asn-1972, Gly-1973, Lys-1976, Thr-1977, and Thr-1978. Thr-1977 contacts Mg(2+). N-linked (GlcNAc...) asparagine glycans are attached at residues Asn-2004 and Asn-2050. Gly-2071 serves as a coordination point for ATP. An essential for ATP binding and ATPase activity region spans residues Val-2242 to Ala-2247. N-linked (GlcNAc...) asparagine glycosylation occurs at Asn-2251. Residues Ala-2262 to Gly-2281 form a disordered region.

N-glycosylated. Post-translationally, proteolytic cleavage by trypsin leads to a 120-kDa N-terminal fragment and a 115-kDa C-terminal fragment that are linked through disulfide bonds. In terms of processing, phosphorylation is independent of light exposure and modulates ATPase activity. Expressed in retina namely in the periphery and incisures of the rod outer segments (ROS).

It localises to the membrane. The protein resides in the cell projection. The protein localises to the cilium. It is found in the photoreceptor outer segment. Its subcellular location is the cytoplasmic vesicle. It localises to the endoplasmic reticulum. It catalyses the reaction ATP + H2O + phospholipidSide 1 = ADP + phosphate + phospholipidSide 2.. The enzyme catalyses an N-all-trans-retinylidenephosphatidylethanolamine(out) + ATP + H2O = an N-all-trans-retinylidenephosphatidylethanolamine(in) + ADP + phosphate + H(+). It carries out the reaction a 1,2-diacyl-sn-glycero-3-phosphoethanolamine(out) + ATP + H2O = a 1,2-diacyl-sn-glycero-3-phosphoethanolamine(in) + ADP + phosphate + H(+). The catalysed reaction is N-11-cis-retinylidenephosphatidylethanolamine(out) + ATP + H2O = N-11-cis-retinylidenephosphatidylethanolamine(in) + ADP + phosphate + H(+). It catalyses the reaction ATP + H2O = ADP + phosphate + H(+). All-trans-retinal transport activity is reduced by EDTA chelation of Mg2+. All-trans-retinal transport activity is inhibited by N-ethylmaleimide (NEM). Phosphatidylethanolamine transport is strongly inhibited by beryllium fluoride and NEM. Functionally, flippase that catalyzes in an ATP-dependent manner the transport of retinal-phosphatidylethanolamine conjugates like the 11-cis and all-trans isomers of N-retinylidene-phosphatidylethanolamine from the lumen to the cytoplasmic leaflet of photoreceptor outer segment disk membranes, where N-cis-retinylidene-phosphatidylethanolamine (N-cis-R-PE) is then isomerized to its all-trans isomer (N-trans-R-PE) and reduced by RDH8 to produce all-trans-retinol (all-trans-rol) and therefore prevents the accumulation of excess of 11-cis-retinal and its schiff-base conjugate and the formation of toxic bisretinoid. Displays both ATPase and GTPase activity that is strongly influenced by the lipid environment and the presence of retinoid compounds. Binds the unprotonated form of N-retinylidene-phosphatidylethanolamine with high affinity in the absence of ATP and ATP binding and hydrolysis induce a protein conformational change that causes the dissociation of N-retinylidene-phosphatidylethanolamine. In Bos taurus (Bovine), this protein is Retinal-specific phospholipid-transporting ATPase ABCA4.